The sequence spans 302 residues: uncharacterized protein (302 aa).

Belongs to the HAD-like hydrolase superfamily.

This is an uncharacterized protein from Saccharomyces cerevisiae (strain ATCC 204508 / S288c) (Baker's yeast).